Reading from the N-terminus, the 314-residue chain is Oxaloacetate tautomerase FAHD2A, mitochondrial (314 aa).

The N-terminal 84 residues, 1 to 84 (MLVSGRRRLL…ATLSVARRAL (84 aa)), are a transit peptide targeting the mitochondrion. Mg(2+) contacts are provided by Glu-159, Glu-161, and Asp-190.

The protein belongs to the FAH family. Mg(2+) is required as a cofactor. Requires Mn(2+) as cofactor.

It is found in the mitochondrion. It catalyses the reaction oxaloacetate = enol-oxaloacetate. Its function is as follows. Tautomerase that converts enol-oxaloacetate, a strong inhibitor of succinate dehydrogenase, to the physiological keto form of oxaloacetate. It is thereby required to maximize aerobic respiration efficiency by preventing succinate dehydrogenase inhibition. This chain is Oxaloacetate tautomerase FAHD2A, mitochondrial, found in Homo sapiens (Human).